A 475-amino-acid polypeptide reads, in one-letter code: PRAME family member 20 (475 aa).

Residues 97 to 124 form an LRR 1; degenerate repeat; it reads RWKLQVLDLQDVSENFWMVWSEAMARRC. One copy of the LRR 2; degenerate repeat lies at 179–203; the sequence is HLCCKKLKMLGMLFHNIRNILKTVN. The stretch at 204–230 is one LRR 3; degenerate repeat; sequence LDCIQEVEVNCNWTLPVLAEFTPYLGQ. The stretch at 231–265 is one LRR 4; degenerate repeat; that stretch reads MRNLRKLVLSDIDSRYISPEQKKEFVTQFTTQFLK. LRR repeat units follow at residues 266–291, 292–323, 324–342, 348–375, and 376–400; these read LRCLQKLYMNSVSFLEGHLDQMLSCL, KTSLNILAITNCVLLESDLKHLSKYPSIGQLK, TLDLSGTRLANFSLVPLQV, AATLEYLDLDDCGIVDSQVNAILPALSR, and CFELTTFSFRGNPISTATLENLLCH.

Belongs to the PRAME family.

The polypeptide is PRAME family member 20 (Homo sapiens (Human)).